A 417-amino-acid chain; its full sequence is Serine hydroxymethyltransferase (417 aa).

Residues leucine 121 and 125–127 (GHL) each bind (6S)-5,6,7,8-tetrahydrofolate. Residue lysine 230 is modified to N6-(pyridoxal phosphate)lysine. 355-357 (SPF) lines the (6S)-5,6,7,8-tetrahydrofolate pocket.

Belongs to the SHMT family. As to quaternary structure, homodimer. Pyridoxal 5'-phosphate is required as a cofactor.

It is found in the cytoplasm. The catalysed reaction is (6R)-5,10-methylene-5,6,7,8-tetrahydrofolate + glycine + H2O = (6S)-5,6,7,8-tetrahydrofolate + L-serine. It participates in one-carbon metabolism; tetrahydrofolate interconversion. It functions in the pathway amino-acid biosynthesis; glycine biosynthesis; glycine from L-serine: step 1/1. Functionally, catalyzes the reversible interconversion of serine and glycine with tetrahydrofolate (THF) serving as the one-carbon carrier. This reaction serves as the major source of one-carbon groups required for the biosynthesis of purines, thymidylate, methionine, and other important biomolecules. Also exhibits THF-independent aldolase activity toward beta-hydroxyamino acids, producing glycine and aldehydes, via a retro-aldol mechanism. This is Serine hydroxymethyltransferase from Legionella pneumophila (strain Lens).